The chain runs to 309 residues: tRNA dimethylallyltransferase (309 aa).

Position 10-17 (10-17) interacts with ATP; it reads GPTAVGKT. 12-17 contributes to the substrate binding site; it reads TAVGKT. The segment at 35-38 is interaction with substrate tRNA; that stretch reads DSMQ.

It belongs to the IPP transferase family. As to quaternary structure, monomer. It depends on Mg(2+) as a cofactor.

It catalyses the reaction adenosine(37) in tRNA + dimethylallyl diphosphate = N(6)-dimethylallyladenosine(37) in tRNA + diphosphate. Its function is as follows. Catalyzes the transfer of a dimethylallyl group onto the adenine at position 37 in tRNAs that read codons beginning with uridine, leading to the formation of N6-(dimethylallyl)adenosine (i(6)A). This Clostridium botulinum (strain Eklund 17B / Type B) protein is tRNA dimethylallyltransferase.